An 82-amino-acid chain; its full sequence is M-zodatoxin-Lt3b (82 aa).

The first 22 residues, 1–22, serve as a signal peptide directing secretion; the sequence is MKTYAVLLALVVAFVCIAESTG. Residues 23-61 constitute a propeptide that is removed on maturation; it reads YPVEDLEDDELTELEAEALLEDLLEDLELEDLDYNEEAR. The Processing quadruplet motif motif lies at 58 to 61; the sequence is EEAR. A81 is subject to Alanine amide.

Cleavage of the propeptide depends on the processing quadruplet motif (XXXR, with at least one of X being E). In terms of tissue distribution, expressed by the venom gland.

It localises to the secreted. In terms of biological role, it has antimicrobial activity against Gram-positive bacteria (A.globiformis VKM Ac-1112 (MIC=0.7 uM), and B.subtilis VKM B-501 (MIC=2.9 uM)), Gram-negative bacteria (E.coli DH5-alpha (MIC=23 uM), E.coli MH1 (MIC=28 uM), and P.aeruginosa PAO1 (MIC&gt;45 uM)), and yeasts (P.pastoris GS115 (MIC=23 uM), and S.cerevisiae Y190 (MIC=23 uM)). Does not have hemolytic against rabbit erythrocytes. Causes paralysis, but is not lethal when injected into insect (M.domestica) larvae. In Lachesana tarabaevi (Spider), this protein is M-zodatoxin-Lt3b.